A 354-amino-acid polypeptide reads, in one-letter code: Rhodopsin (354 aa).

Topologically, residues 1-36 (MNGTEGPYFYVPMVNTTGIVRSPYEYPQYYLVSPAA) are extracellular. Asparagine 2 and asparagine 15 each carry an N-linked (GlcNAc...) asparagine glycan. The helical transmembrane segment at 37-61 (YACLGAYMFFLILVGFPINFLTLYV) threads the bilayer. The Cytoplasmic portion of the chain corresponds to 62-73 (TIEHKKLRTPLN). The helical transmembrane segment at 74 to 96 (YILLNLAVADLFMVFGGFTTTIY) threads the bilayer. Residues 97 to 110 (TSMHGYFVLGRLGC) lie on the Extracellular side of the membrane. Cysteine 110 and cysteine 187 are joined by a disulfide. Residues 111 to 133 (NLEGYFATLGGEIGLWSLVVLAV) traverse the membrane as a helical segment. Positions 134–136 (ERW) match the 'Ionic lock' involved in activated form stabilization motif. At 134–152 (ERWLVVCKPISNFRFSENH) the chain is on the cytoplasmic side. The helical transmembrane segment at 153-173 (AIMGLVFTWIMANSCAAPPLL) threads the bilayer. The Extracellular portion of the chain corresponds to 174 to 202 (GWSRYIPEGMQCSCGVDYYTRAEGFNNES). The chain crosses the membrane as a helical span at residues 203–224 (FVIYMFICHFCIPLIVVFFCYG). Residues 225 to 252 (RLLCAVKEAAAAQQESETTQRAEREVTR) lie on the Cytoplasmic side of the membrane. Residues 253–274 (MVVIMVIGFLVCWIPYASVAWY) form a helical membrane-spanning segment. The Extracellular portion of the chain corresponds to 275–286 (IFTHQGSEFGPL). The chain crosses the membrane as a helical span at residues 287-308 (FMTVPAFFAKSASIYNPLIYIC). The residue at position 296 (lysine 296) is an N6-(retinylidene)lysine. The Cytoplasmic portion of the chain corresponds to 309–354 (MNKQFRHCMITTLCCGKNPFEEEEGASTTASKTEASSVSSSSVSPA). 2 S-palmitoyl cysteine lipidation sites follow: cysteine 322 and cysteine 323. Residues 333-354 (GASTTASKTEASSVSSSSVSPA) form a disordered region. A compositionally biased stretch (low complexity) spans 334–354 (ASTTASKTEASSVSSSSVSPA).

Belongs to the G-protein coupled receptor 1 family. Opsin subfamily. Post-translationally, phosphorylated on some or all of the serine and threonine residues present in the C-terminal region. Contains one covalently linked retinal chromophore.

Its subcellular location is the membrane. It localises to the cell projection. The protein localises to the cilium. It is found in the photoreceptor outer segment. In terms of biological role, photoreceptor required for image-forming vision at low light intensity. While most salt water fish species use retinal as chromophore, most freshwater fish use 3-dehydroretinal, or a mixture of retinal and 3-dehydroretinal. Light-induced isomerization of 11-cis to all-trans retinal triggers a conformational change that activates signaling via G-proteins. Subsequent receptor phosphorylation mediates displacement of the bound G-protein alpha subunit by arrestin and terminates signaling. The polypeptide is Rhodopsin (rho) (Poecilia reticulata (Guppy)).